Reading from the N-terminus, the 220-residue chain is Large ribosomal subunit protein uL16 (220 aa).

The protein belongs to the universal ribosomal protein uL16 family. Component of the small ribosomal subunit. Mature ribosomes consist of a small (40S) and a large (60S) subunit. The 40S subunit contains about 33 different proteins and 1 molecule of RNA (18S). The 60S subunit contains about 49 different proteins and 3 molecules of RNA (25S, 5.8S and 5S).

The sequence is that of Large ribosomal subunit protein uL16 (RPL10) from Euphorbia esula (Leafy spurge).